A 129-amino-acid chain; its full sequence is MDTMGRHVISELWGCDTNKLNNMEFIEQVFVNAALRAGAEVREVAFHKFAPQGVSGVVIISESHLTIHSFPEHGYASIDVYTCGPVIDPNVAAEFIARELNATTSEVLELPRGMGPVKPEKRLSHSAVK.

The active-site Schiff-base intermediate with substrate; via pyruvic acid is the S63. S63 carries the pyruvic acid (Ser); by autocatalysis modification. H68 (proton acceptor; for processing activity) is an active-site residue. C83 functions as the Proton donor; for catalytic activity in the catalytic mechanism.

This sequence belongs to the prokaryotic AdoMetDC family. Type 1 subfamily. As to quaternary structure, heterotetramer of two alpha and two beta chains arranged as a dimer of alpha/beta heterodimers. Requires pyruvate as cofactor. Is synthesized initially as an inactive proenzyme. Formation of the active enzyme involves a self-maturation process in which the active site pyruvoyl group is generated from an internal serine residue via an autocatalytic post-translational modification. Two non-identical subunits are generated from the proenzyme in this reaction, and the pyruvate is formed at the N-terminus of the alpha chain, which is derived from the carboxyl end of the proenzyme. The post-translation cleavage follows an unusual pathway, termed non-hydrolytic serinolysis, in which the side chain hydroxyl group of the serine supplies its oxygen atom to form the C-terminus of the beta chain, while the remainder of the serine residue undergoes an oxidative deamination to produce ammonia and the pyruvoyl group blocking the N-terminus of the alpha chain.

The enzyme catalyses S-adenosyl-L-methionine + H(+) = S-adenosyl 3-(methylsulfanyl)propylamine + CO2. Its pathway is amine and polyamine biosynthesis; S-adenosylmethioninamine biosynthesis; S-adenosylmethioninamine from S-adenosyl-L-methionine: step 1/1. Catalyzes the decarboxylation of S-adenosylmethionine to S-adenosylmethioninamine (dcAdoMet), the propylamine donor required for the synthesis of the polyamines spermine and spermidine from the diamine putrescine. The chain is S-adenosylmethionine decarboxylase proenzyme from Shouchella clausii (strain KSM-K16) (Alkalihalobacillus clausii).